Reading from the N-terminus, the 108-residue chain is U-scoloptoxin(16)-Er10a (108 aa).

The N-terminal stretch at 1–24 (MASFTSFCVLFTFCLLLLAHQARS) is a signal peptide.

Belongs to the scoloptoxin-16 family. Post-translationally, contains 4 disulfide bonds. As to expression, expressed by the venom gland.

It localises to the secreted. This chain is U-scoloptoxin(16)-Er10a, found in Ethmostigmus rubripes (Giant centipede).